A 138-amino-acid chain; its full sequence is Nucleoside diphosphate kinase (138 aa).

The ATP site is built by Lys-9, Phe-57, Arg-85, Thr-91, Arg-102, and Asn-112. Catalysis depends on His-115, which acts as the Pros-phosphohistidine intermediate.

The protein belongs to the NDK family. As to quaternary structure, homotetramer. Mg(2+) is required as a cofactor.

It localises to the cytoplasm. It carries out the reaction a 2'-deoxyribonucleoside 5'-diphosphate + ATP = a 2'-deoxyribonucleoside 5'-triphosphate + ADP. The enzyme catalyses a ribonucleoside 5'-diphosphate + ATP = a ribonucleoside 5'-triphosphate + ADP. Major role in the synthesis of nucleoside triphosphates other than ATP. The ATP gamma phosphate is transferred to the NDP beta phosphate via a ping-pong mechanism, using a phosphorylated active-site intermediate. The chain is Nucleoside diphosphate kinase from Desulforapulum autotrophicum (strain ATCC 43914 / DSM 3382 / VKM B-1955 / HRM2) (Desulfobacterium autotrophicum).